We begin with the raw amino-acid sequence, 269 residues long: Tryptophan synthase alpha chain (269 aa).

Catalysis depends on proton acceptor residues glutamate 49 and aspartate 60.

Belongs to the TrpA family. In terms of assembly, tetramer of two alpha and two beta chains.

The enzyme catalyses (1S,2R)-1-C-(indol-3-yl)glycerol 3-phosphate + L-serine = D-glyceraldehyde 3-phosphate + L-tryptophan + H2O. It functions in the pathway amino-acid biosynthesis; L-tryptophan biosynthesis; L-tryptophan from chorismate: step 5/5. In terms of biological role, the alpha subunit is responsible for the aldol cleavage of indoleglycerol phosphate to indole and glyceraldehyde 3-phosphate. The sequence is that of Tryptophan synthase alpha chain from Proteus mirabilis (strain HI4320).